We begin with the raw amino-acid sequence, 221 residues long: Phosphoribosylformylglycinamidine synthase subunit PurQ (221 aa).

The 217-residue stretch at 5 to 221 (TVGIVVFPGS…LYTLRSLITQ (217 aa)) folds into the Glutamine amidotransferase type-1 domain. Residue C89 is the Nucleophile of the active site. Residues H197 and E199 contribute to the active site.

In terms of assembly, part of the FGAM synthase complex composed of 1 PurL, 1 PurQ and 2 PurS subunits.

It is found in the cytoplasm. It carries out the reaction N(2)-formyl-N(1)-(5-phospho-beta-D-ribosyl)glycinamide + L-glutamine + ATP + H2O = 2-formamido-N(1)-(5-O-phospho-beta-D-ribosyl)acetamidine + L-glutamate + ADP + phosphate + H(+). The enzyme catalyses L-glutamine + H2O = L-glutamate + NH4(+). The protein operates within purine metabolism; IMP biosynthesis via de novo pathway; 5-amino-1-(5-phospho-D-ribosyl)imidazole from N(2)-formyl-N(1)-(5-phospho-D-ribosyl)glycinamide: step 1/2. Its function is as follows. Part of the phosphoribosylformylglycinamidine synthase complex involved in the purines biosynthetic pathway. Catalyzes the ATP-dependent conversion of formylglycinamide ribonucleotide (FGAR) and glutamine to yield formylglycinamidine ribonucleotide (FGAM) and glutamate. The FGAM synthase complex is composed of three subunits. PurQ produces an ammonia molecule by converting glutamine to glutamate. PurL transfers the ammonia molecule to FGAR to form FGAM in an ATP-dependent manner. PurS interacts with PurQ and PurL and is thought to assist in the transfer of the ammonia molecule from PurQ to PurL. The chain is Phosphoribosylformylglycinamidine synthase subunit PurQ from Prochlorococcus marinus subsp. pastoris (strain CCMP1986 / NIES-2087 / MED4).